A 276-amino-acid polypeptide reads, in one-letter code: Putative hydro-lyase Xaut_1503 (276 aa).

It belongs to the D-glutamate cyclase family.

This Xanthobacter autotrophicus (strain ATCC BAA-1158 / Py2) protein is Putative hydro-lyase Xaut_1503.